Here is a 90-residue protein sequence, read N- to C-terminus: Phosphoribosyl-ATP pyrophosphatase (90 aa).

It belongs to the PRA-PH family.

It localises to the cytoplasm. The enzyme catalyses 1-(5-phospho-beta-D-ribosyl)-ATP + H2O = 1-(5-phospho-beta-D-ribosyl)-5'-AMP + diphosphate + H(+). Its pathway is amino-acid biosynthesis; L-histidine biosynthesis; L-histidine from 5-phospho-alpha-D-ribose 1-diphosphate: step 2/9. This Streptomyces coelicolor (strain ATCC BAA-471 / A3(2) / M145) protein is Phosphoribosyl-ATP pyrophosphatase (hisE).